The sequence spans 7524 residues: Mucin-19 (7524 aa).

A signal peptide spans 1-20; sequence MKLILLYLAVVLCFVGKGAA. The tract at residues 20–47 is disordered; the sequence is ARSPTTTRTPTPSTSEKASHVPEATPTY. Low complexity predominate over residues 21–34; that stretch reads RSPTTTRTPTPSTS. Positions 55–225 constitute a VWFD 1 domain; that stretch reads GEATMWGKDK…VCEDGVQYCD (171 aa). Cysteines 79 and 224 form a disulfide. The 56-residue stretch at 298 to 353 folds into the TIL domain; that stretch reads CPGKHIYKECGPSNPPTCSNVAPFQDSECVSGCTCPEGYLLDDIGEKGKCVLKEKC. 2 VWFD domains span residues 392–568 and 851–1025; these read GICK…EGSP and STCH…QECS. 6 disulfide bridges follow: C394/C529, C434/C442, C853/C989, C875/C1024, C884/C986, and C900/C907. Over residues 1244–1261 the composition is skewed to low complexity; sequence AAATRASSSTSGSVETSV. Disordered stretches follow at residues 1244–7217 and 7249–7297; these read AAAT…SSLA and SVIK…CPDS. Residues 1262-1289 show a composition bias toward polar residues; that stretch reads PATTSTSKAQAHITTASSTETSALNSTA. 2 stretches are compositionally biased toward low complexity: residues 1320–7099 and 7112–7217; these read PAVS…AGSG and STSG…SSLA. 36 repeat units span residues 1321–1483, 1484–1646, 1647–1809, 1810–1972, 1973–2135, 2136–2298, 2299–2461, 2462–2624, 2625–2787, 2788–2950, 2951–3113, 3114–3276, 3277–3439, 3440–3602, 3603–3765, 3766–3928, 3929–4091, 4092–4254, 4255–4417, 4418–4580, 4581–4743, 4744–4906, 4907–5069, 5070–5232, 5233–5395, 5396–5558, 5559–5721, 5722–5884, 5885–6047, 6048–6210, 6211–6373, 6374–6536, 6537–6699, 6700–6862, 6863–7025, and 7026–7188. The segment at 1321-7188 is approximate repeats; sequence AVSTTSAGST…AETAGSTTGP (5868 aa). Over residues 7261–7291 the composition is skewed to polar residues; sequence AKSNETTGRTTSMPASTSVAPGVTTSPNISQ. VWFC domains follow at residues 7302–7368 and 7370–7432; these read PVCH…GHCE and RTCL…YKCK. Cystine bridges form between C7435-C7482, C7449-C7496, C7458-C7512, and C7462-C7514. The 85-residue stretch at 7435–7519 folds into the CTCK domain; that stretch reads CRTTPVNVTV…TTCSCRDQCE (85 aa).

In terms of tissue distribution, specifically expressed in sublingual salivary glands. Expressed by mucous cells of the submandibular gland and submucosal gland of the trachea. Expression is altered in sld (sublingual gland differentiation arrest) mutants.

Its subcellular location is the secreted. Functionally, may function in ocular mucus homeostasis. This is Mucin-19 (Muc19) from Mus musculus (Mouse).